We begin with the raw amino-acid sequence, 519 residues long: 4-nitrophenol 2-monooxygenase, oxygenase component (519 aa).

It belongs to the FADH(2)-utilizing monooxygenase family. Homotetramer. 4-nitrophenol 2-monooxygenase complex consists of an oxygenase component NphA1 and a flavin reductase component NphA2. It depends on FAD as a cofactor.

The enzyme catalyses 4-nitrophenol + NADH + O2 + H(+) = 4-nitrocatechol + NAD(+) + H2O. With respect to regulation, partially inhibited by concentrations of FAD above 10 uM and completely inhibited by concentrations above 50 uM. Functionally, utilizes the flavins supplied by NphA2 to catalyze the degradation of 4-nitrophenol (4-NP) via 4-nitrocatechol (4-NC) which is used as the sole carbon, nitrogen, and energy source. Can also degrade phenol and 4-chlorophenol as rapidly as 4-NP. The chain is 4-nitrophenol 2-monooxygenase, oxygenase component (nphA1) from Rhodococcus sp.